Reading from the N-terminus, the 123-residue chain is Small ribosomal subunit protein uS12c (123 aa).

Residues 1–16 (MPTIQQLIRNSRQPAE) show a composition bias toward polar residues. Residues 1 to 23 (MPTIQQLIRNSRQPAENRTKSPA) are disordered.

This sequence belongs to the universal ribosomal protein uS12 family. As to quaternary structure, part of the 30S ribosomal subunit.

It is found in the plastid. It localises to the chloroplast. Its function is as follows. With S4 and S5 plays an important role in translational accuracy. Located at the interface of the 30S and 50S subunits. This chain is Small ribosomal subunit protein uS12c (rps12), found in Staurastrum punctulatum (Green alga).